The chain runs to 143 residues: Large ribosomal subunit protein eL28y (143 aa).

Belongs to the eukaryotic ribosomal protein eL28 family.

This chain is Large ribosomal subunit protein eL28y (RPL28C), found in Arabidopsis thaliana (Mouse-ear cress).